The following is a 104-amino-acid chain: Large ribosomal subunit protein bL21 (104 aa).

Belongs to the bacterial ribosomal protein bL21 family. As to quaternary structure, part of the 50S ribosomal subunit. Contacts protein L20.

Its function is as follows. This protein binds to 23S rRNA in the presence of protein L20. This is Large ribosomal subunit protein bL21 from Lactococcus lactis subsp. lactis (strain IL1403) (Streptococcus lactis).